Consider the following 79-residue polypeptide: UPF0180 protein BCAH820_1484 (79 aa).

Belongs to the UPF0180 family.

The sequence is that of UPF0180 protein BCAH820_1484 from Bacillus cereus (strain AH820).